A 642-amino-acid polypeptide reads, in one-letter code: Epithelial sodium channel subunit alpha (642 aa).

Over 1 to 81 the chain is Cytoplasmic; it reads MHQVVTVKAE…VCSKRNKMKT (81 aa). A helical transmembrane segment spans residues 82–102; that stretch reads AFWSVLFFLTFGLMYWQFGIL. Over 103-553 the chain is Extracellular; sequence YREYFSFPVN…NQWSLWFGSS (451 aa). 10 cysteine pairs are disulfide-bonded: C130–C297, C222–C229, C274–C281, C385–C470, C407–C447, C407–C466, C411–C462, C420–C447, C420–C470, and C422–C436. Residues 170–209 are disordered; that stretch reads GAAQSSQKRSQRSLSHHVQRHPLRRRKRNEPVSLKGNSPP. The span at 178 to 197 shows a compositional bias: basic residues; it reads RSQRSLSHHVQRHPLRRRKR. A helical membrane pass occupies residues 554 to 574; that stretch reads VLSVVELAELILDFIAITIIL. Residues 575-642 are Cytoplasmic-facing; sequence SFKRFRSRQV…RDGEAVIGLE (68 aa). The interval 587 to 608 is disordered; that stretch reads PSVPPPGAHDNTAFQSEPADPS.

Belongs to the amiloride-sensitive sodium channel (TC 1.A.6) family. SCNN1A subfamily. Heterotrimer; disulfide-linked and containing an alpha/SCNN1A, a beta/SCNN1B and a gamma/SCNN1G subunit.

The protein localises to the apical cell membrane. The protein resides in the cell projection. Its subcellular location is the cilium. It localises to the cytoplasmic granule. It is found in the cytoplasm. The protein localises to the cytoplasmic vesicle. The protein resides in the secretory vesicle. Its subcellular location is the acrosome. It localises to the flagellum. It carries out the reaction Na(+)(in) = Na(+)(out). Originally identified and characterized by its inhibition by the diuretic drug amiloride. Functionally, this is one of the three pore-forming subunits of the heterotrimeric epithelial sodium channel (ENaC), a critical regulator of sodium balance and fluid homeostasis. ENaC operates in epithelial tissues, where it mediates the electrodiffusion of sodium ions from extracellular fluid through the apical membrane of cells, with water following osmotically. The polypeptide is Epithelial sodium channel subunit alpha (Pelodiscus sinensis (Chinese softshell turtle)).